A 142-amino-acid polypeptide reads, in one-letter code: Large ribosomal subunit protein uL11 (142 aa).

Belongs to the universal ribosomal protein uL11 family. Part of the ribosomal stalk of the 50S ribosomal subunit. Interacts with L10 and the large rRNA to form the base of the stalk. L10 forms an elongated spine to which L12 dimers bind in a sequential fashion forming a multimeric L10(L12)X complex. Post-translationally, one or more lysine residues are methylated.

Functionally, forms part of the ribosomal stalk which helps the ribosome interact with GTP-bound translation factors. This Mycobacterium ulcerans (strain Agy99) protein is Large ribosomal subunit protein uL11.